Here is a 190-residue protein sequence, read N- to C-terminus: Elongation factor P-like protein (190 aa).

The protein belongs to the elongation factor P family.

The protein is Elongation factor P-like protein of Psychromonas ingrahamii (strain DSM 17664 / CCUG 51855 / 37).